Here is a 99-residue protein sequence, read N- to C-terminus: NADH-quinone oxidoreductase subunit K (99 aa).

The next 3 membrane-spanning stretches (helical) occupy residues 3 to 23 (PANY…GVLL), 28 to 48 (IVMF…FVTF), and 59 to 79 (MIAF…LAII).

It belongs to the complex I subunit 4L family. As to quaternary structure, NDH-1 is composed of 14 different subunits. Subunits NuoA, H, J, K, L, M, N constitute the membrane sector of the complex.

It is found in the cell membrane. The enzyme catalyses a quinone + NADH + 5 H(+)(in) = a quinol + NAD(+) + 4 H(+)(out). Its function is as follows. NDH-1 shuttles electrons from NADH, via FMN and iron-sulfur (Fe-S) centers, to quinones in the respiratory chain. The immediate electron acceptor for the enzyme in this species is believed to be a menaquinone. Couples the redox reaction to proton translocation (for every two electrons transferred, four hydrogen ions are translocated across the cytoplasmic membrane), and thus conserves the redox energy in a proton gradient. In Mycobacterium marinum (strain ATCC BAA-535 / M), this protein is NADH-quinone oxidoreductase subunit K.